A 564-amino-acid polypeptide reads, in one-letter code: Transmembrane anterior posterior transformation protein 1 (564 aa).

Over residues 1–10 (MAGVCDAAAP) the composition is skewed to low complexity. The tract at residues 1–55 (MAGVCDAAAPGEGGGGGADGPERTGRGEAEQPGGGGHGPAPQHTETLGFYESDRR) is disordered. At Ala2 the chain carries N-acetylalanine. Over residues 20-29 (GPERTGRGEA) the composition is skewed to basic and acidic residues. The next 6 membrane-spanning stretches (helical) occupy residues 108-128 (LMFFGIFLCLDAFLYVFTLLP), 154-176 (PAQVCDILKGVILVICYFMMHYV), 233-253 (IGVIPHFFMAVLYVFLHAILI), 332-352 (LWVLFPDVCMVIASEIAVDIV), 400-420 (GFIPLPLAVLLIRVVTSSIKV), and 429-449 (VILFYFGLISLKILNSIVLLG). The segment at 464–546 (LFNPPPASTP…ENSELKHRSS (83 aa)) is disordered. The span at 473-489 (PGKPSSKSQSKGKPSQG) shows a compositional bias: low complexity. Polar residues-rich tracts occupy residues 490–505 (LSTEENLSASVTSQPG) and 516–525 (VTSNSDQFLT). Ser520 is subject to Phosphoserine. Thr526 carries the post-translational modification Phosphothreonine. A compositionally biased stretch (basic and acidic residues) spans 532-546 (KDITQENSELKHRSS).

It belongs to the TAPT1 family. Ubiquitous. Expressed throughout embryo.

The protein resides in the cytoplasm. It is found in the cytoskeleton. The protein localises to the microtubule organizing center. Its subcellular location is the centrosome. It localises to the cilium basal body. The protein resides in the membrane. Plays a role in primary cilia formation. May act as a downstream effector of HOXC8 possibly by transducing or transmitting extracellular information required for axial skeletal patterning during development. May be involved in cartilage and bone development. May play a role in the differentiation of cranial neural crest cells. The sequence is that of Transmembrane anterior posterior transformation protein 1 (Tapt1) from Mus musculus (Mouse).